The chain runs to 470 residues: Serine hydroxymethyltransferase, cytosolic (470 aa).

The segment covering 1–11 (MSAYALSQSHR) has biased composition (polar residues). Positions 1-23 (MSAYALSQSHRQLTEGHLKDTDP) are disordered. An N-acetylserine modification is found at Ser2. A compositionally biased stretch (basic and acidic residues) spans 12-23 (QLTEGHLKDTDP). At Lys249 the chain carries N6-(pyridoxal phosphate)lysine.

The protein belongs to the SHMT family. In terms of assembly, homotetramer. Requires pyridoxal 5'-phosphate as cofactor.

It localises to the cytoplasm. The catalysed reaction is (6R)-5,10-methylene-5,6,7,8-tetrahydrofolate + glycine + H2O = (6S)-5,6,7,8-tetrahydrofolate + L-serine. It functions in the pathway one-carbon metabolism; tetrahydrofolate interconversion. Functionally, interconversion of serine and glycine. The sequence is that of Serine hydroxymethyltransferase, cytosolic (SHM2) from Candida albicans (strain SC5314 / ATCC MYA-2876) (Yeast).